The primary structure comprises 338 residues: Glycerol-3-phosphate dehydrogenase [NAD(P)+] (338 aa).

4 residues coordinate NADPH: Ser-14, Tyr-15, His-35, and Lys-109. Sn-glycerol 3-phosphate is bound by residues Lys-109, Gly-138, and Thr-140. Ala-142 is a binding site for NADPH. Residues Lys-194, Asp-247, Ser-257, Arg-258, and Asn-259 each contribute to the sn-glycerol 3-phosphate site. The active-site Proton acceptor is the Lys-194. Residue Arg-258 participates in NADPH binding. Residues Val-282 and Glu-284 each contribute to the NADPH site.

Belongs to the NAD-dependent glycerol-3-phosphate dehydrogenase family.

It is found in the cytoplasm. The catalysed reaction is sn-glycerol 3-phosphate + NAD(+) = dihydroxyacetone phosphate + NADH + H(+). It carries out the reaction sn-glycerol 3-phosphate + NADP(+) = dihydroxyacetone phosphate + NADPH + H(+). It functions in the pathway membrane lipid metabolism; glycerophospholipid metabolism. Functionally, catalyzes the reduction of the glycolytic intermediate dihydroxyacetone phosphate (DHAP) to sn-glycerol 3-phosphate (G3P), the key precursor for phospholipid synthesis. In Shewanella putrefaciens (strain CN-32 / ATCC BAA-453), this protein is Glycerol-3-phosphate dehydrogenase [NAD(P)+].